The sequence spans 530 residues: Membrane protein insertase YidC (530 aa).

The next 4 membrane-spanning stretches (helical) occupy residues 5 to 25, 348 to 368, 418 to 438, and 492 to 512; these read VVIA…MFPP, YGLA…PLTH, LPML…MFSI, and PVVF…YWLI.

This sequence belongs to the OXA1/ALB3/YidC family. Type 1 subfamily. Interacts with the Sec translocase complex via SecD. Specifically interacts with transmembrane segments of nascent integral membrane proteins during membrane integration.

The protein resides in the cell inner membrane. In terms of biological role, required for the insertion and/or proper folding and/or complex formation of integral membrane proteins into the membrane. Involved in integration of membrane proteins that insert both dependently and independently of the Sec translocase complex, as well as at least some lipoproteins. Aids folding of multispanning membrane proteins. The protein is Membrane protein insertase YidC of Geotalea daltonii (strain DSM 22248 / JCM 15807 / FRC-32) (Geobacter daltonii).